A 195-amino-acid polypeptide reads, in one-letter code: ATP-dependent Clp protease proteolytic subunit 3 (195 aa).

Ser-97 acts as the Nucleophile in catalysis. The active site involves His-122.

It belongs to the peptidase S14 family. Fourteen ClpP subunits assemble into 2 heptameric rings which stack back to back to give a disk-like structure with a central cavity, resembling the structure of eukaryotic proteasomes.

It is found in the cytoplasm. It carries out the reaction Hydrolysis of proteins to small peptides in the presence of ATP and magnesium. alpha-casein is the usual test substrate. In the absence of ATP, only oligopeptides shorter than five residues are hydrolyzed (such as succinyl-Leu-Tyr-|-NHMec, and Leu-Tyr-Leu-|-Tyr-Trp, in which cleavage of the -Tyr-|-Leu- and -Tyr-|-Trp bonds also occurs).. In terms of biological role, cleaves peptides in various proteins in a process that requires ATP hydrolysis. Has a chymotrypsin-like activity. Plays a major role in the degradation of misfolded proteins. The sequence is that of ATP-dependent Clp protease proteolytic subunit 3 from Rhizobium meliloti (strain 1021) (Ensifer meliloti).